Reading from the N-terminus, the 632-residue chain is 2-oxoacid:ferredoxin oxidoreductase subunit alpha (632 aa).

Residues 253 to 257 (YPITP) carry the YPITP motif motif. Substrate-binding residues include threonine 256 and arginine 344.

Heterodimer composed of an alpha and a beta subunit.

The protein resides in the cytoplasm. It carries out the reaction a 2-oxocarboxylate + 2 oxidized [2Fe-2S]-[ferredoxin] + CoA = an acyl-CoA + 2 reduced [2Fe-2S]-[ferredoxin] + CO2 + H(+). Catalyzes the coenzyme A-dependent oxidative decarboxylation of different 2-oxoacids such as 2-oxoglutarate, pyruvate and 2-oxobutyrate to form their CoA derivatives. The sequence is that of 2-oxoacid:ferredoxin oxidoreductase subunit alpha from Sulfolobus sp.